Consider the following 197-residue polypeptide: Imidazoleglycerol-phosphate dehydratase (197 aa).

It belongs to the imidazoleglycerol-phosphate dehydratase family.

It is found in the cytoplasm. The enzyme catalyses D-erythro-1-(imidazol-4-yl)glycerol 3-phosphate = 3-(imidazol-4-yl)-2-oxopropyl phosphate + H2O. It participates in amino-acid biosynthesis; L-histidine biosynthesis; L-histidine from 5-phospho-alpha-D-ribose 1-diphosphate: step 6/9. In Nitrosococcus oceani (strain ATCC 19707 / BCRC 17464 / JCM 30415 / NCIMB 11848 / C-107), this protein is Imidazoleglycerol-phosphate dehydratase.